The following is a 251-amino-acid chain: uncharacterized protein (251 aa).

This sequence to M.jannaschii MJ0638 and MJ1123 and M.tuberculosis Rv2003c.

This is an uncharacterized protein from Methanocaldococcus jannaschii (strain ATCC 43067 / DSM 2661 / JAL-1 / JCM 10045 / NBRC 100440) (Methanococcus jannaschii).